The following is a 727-amino-acid chain: NADH-ubiquinone oxidoreductase 75 kDa subunit, mitochondrial (727 aa).

The transit peptide at 1 to 23 directs the protein to the mitochondrion; the sequence is MLRIPVRKALVGLSKSPKGCVRT. A 2Fe-2S ferredoxin-type domain is found at 30–108; the sequence is NLIEVFVDGQ…GWNILTNSEK (79 aa). [2Fe-2S] cluster-binding residues include Cys64, Cys75, and Cys78. The residue at position 84 (Lys84) is an N6-acetyllysine. Cys92 is a binding site for [2Fe-2S] cluster. The 40-residue stretch at 108 to 147 folds into the 4Fe-4S His(Cys)3-ligated-type domain; it reads KSKKAREGVMELLLANHPLDCPICDQGGECDLQDQSMMFG. 8 residues coordinate [4Fe-4S] cluster: His124, Cys128, Cys131, Cys137, Cys176, Cys179, Cys182, and Cys226. Positions 245–301 constitute a 4Fe-4S Mo/W bis-MGD-type domain; it reads TRKTESIDVMDAVGSNIVVSTRTGEVMRILPRMHEDINEEWISDKTRFAYDGLKRQR. Lys467, Lys499, and Lys709 each carry N6-acetyllysine.

Belongs to the complex I 75 kDa subunit family. As to quaternary structure, core subunit of respiratory chain NADH dehydrogenase (Complex I) which is composed of 45 different subunits. This is the largest subunit of complex I and it is a component of the iron-sulfur (IP) fragment of the enzyme. Complex I associates with ubiquinol-cytochrome reductase complex (Complex III) to form supercomplexes. Interacts with MDM2 and AKAP1. [2Fe-2S] cluster is required as a cofactor. [4Fe-4S] cluster serves as cofactor.

The protein resides in the mitochondrion inner membrane. It carries out the reaction a ubiquinone + NADH + 5 H(+)(in) = a ubiquinol + NAD(+) + 4 H(+)(out). Its function is as follows. Core subunit of the mitochondrial membrane respiratory chain NADH dehydrogenase (Complex I) which catalyzes electron transfer from NADH through the respiratory chain, using ubiquinone as an electron acceptor. Essential for catalysing the entry and efficient transfer of electrons within complex I. Plays a key role in the assembly and stability of complex I and participates in the association of complex I with ubiquinol-cytochrome reductase complex (Complex III) to form supercomplexes. This Pongo abelii (Sumatran orangutan) protein is NADH-ubiquinone oxidoreductase 75 kDa subunit, mitochondrial (NDUFS1).